The primary structure comprises 59 residues: Large ribosomal subunit protein uL30 (59 aa).

The protein belongs to the universal ribosomal protein uL30 family. Part of the 50S ribosomal subunit.

The chain is Large ribosomal subunit protein uL30 from Geobacter metallireducens (strain ATCC 53774 / DSM 7210 / GS-15).